The following is a 524-amino-acid chain: MLKDIHQHRILILDFGSQYAQLIARRVREIGVYCELMPCDIDEETIRDFNPHGIILSGGPETVTLSHTLRAPAFIFEIGCPVLGICYGMQTMAYQLGGKVNRTAKAEFGHAQLRVLNPAFLFDGIEDQVSPQGEPLLDVWMSHGDIVSELPPGFEATACTDNSPLAAMADFKRRFFGLQFHPEVTHTPQGHRILAHFVIHICQCIPNWTTKHIIEDSIRDIQEKVGKEQVIVGLSGGVDSAVTATLVHKAIGDQLVCVLVDTGLLRLNEVDEVLNVFQKHLGAKVICVDAKDRFMKALKGISDPEEKRKIAGEQFIRVFEEQAKKLNVKWLGQGTIYPDVIESAKTKTGKGHIIKTHHNVGGLPLNMELKLIEPLRELFKDEVRKLGLELGLPADLIYRHPFPGPGLAIRILGEVSAEYINILKQADAIFIEELKKSDYYHQVSQAFAVFMPLKSVGVKGDARHYGYIIALRAVKTVDFMTAQWADLPHEFLSKVSHRIVNEIKEVSRVVYDMTNKPPATIEWE.

Positions 9 to 207 (RILILDFGSQ…VIHICQCIPN (199 aa)) constitute a Glutamine amidotransferase type-1 domain. Cys86 functions as the Nucleophile in the catalytic mechanism. Catalysis depends on residues His181 and Glu183. The GMPS ATP-PPase domain occupies 208-399 (WTTKHIIEDS…LGLPADLIYR (192 aa)). 235–241 (SGGVDSA) is a binding site for ATP.

As to quaternary structure, homodimer.

The enzyme catalyses XMP + L-glutamine + ATP + H2O = GMP + L-glutamate + AMP + diphosphate + 2 H(+). It functions in the pathway purine metabolism; GMP biosynthesis; GMP from XMP (L-Gln route): step 1/1. Functionally, catalyzes the synthesis of GMP from XMP. The polypeptide is GMP synthase [glutamine-hydrolyzing] (Coxiella burnetii (strain RSA 493 / Nine Mile phase I)).